The chain runs to 277 residues: Collectin-10 (277 aa).

Positions 1–27 (MNGFRVLLRSNLSMLLLLALLHFQSLG) are cleaved as a signal peptide. N-linked (GlcNAc...) asparagine glycosylation is present at N11. The segment at 41-103 (THTISPGPKG…IGKKGDKGEK (63 aa)) is disordered. The Collagen-like domain occupies 45–103 (SPGPKGDDGERGDTGEEGKDGKVGRQGPKGVKGELGDMGAQGNIGKSGPIGKKGDKGEK). The span at 49–67 (KGDDGERGDTGEEGKDGKV) shows a compositional bias: basic and acidic residues. The region spanning 155–271 (TEEKFYYIVQ…CHLTMYFVCE (117 aa)) is the C-type lectin domain. Intrachain disulfides connect C176/C270 and C248/C262. N258 carries N-linked (GlcNAc...) asparagine glycosylation.

This sequence belongs to the COLEC10/COLEC11 family. As to expression, expressed mainly in the liver and stomach, but also in muscles, testes, and intestines.

The protein localises to the secreted. Its subcellular location is the golgi apparatus. The protein resides in the cytoplasm. Lectin that binds to various sugars: galactose &gt; mannose = fucose &gt; N-acetylglucosamine &gt; N-acetylgalactosamine. Acts as a chemoattractant, probably involved in the regulation of cell migration. This chain is Collectin-10 (Colec10), found in Mus musculus (Mouse).